The primary structure comprises 407 residues: Chorismate synthase (407 aa).

Residues arginine 40 and arginine 46 each coordinate NADP(+). FMN-binding positions include arginine 138–serine 140 and glutamine 259–alanine 260. Positions arginine 275 to methionine 284 are enriched in basic and acidic residues. A disordered region spans residues arginine 275–glycine 308. FMN-binding positions include glycine 303, lysine 318–threonine 322, and arginine 344.

The protein belongs to the chorismate synthase family. As to quaternary structure, homotetramer. FMNH2 is required as a cofactor.

The enzyme catalyses 5-O-(1-carboxyvinyl)-3-phosphoshikimate = chorismate + phosphate. It functions in the pathway metabolic intermediate biosynthesis; chorismate biosynthesis; chorismate from D-erythrose 4-phosphate and phosphoenolpyruvate: step 7/7. In terms of biological role, catalyzes the anti-1,4-elimination of the C-3 phosphate and the C-6 proR hydrogen from 5-enolpyruvylshikimate-3-phosphate (EPSP) to yield chorismate, which is the branch point compound that serves as the starting substrate for the three terminal pathways of aromatic amino acid biosynthesis. This reaction introduces a second double bond into the aromatic ring system. In Mycobacterium ulcerans (strain Agy99), this protein is Chorismate synthase.